A 92-amino-acid chain; its full sequence is Small ribosomal subunit protein uS19c (92 aa).

The protein belongs to the universal ribosomal protein uS19 family.

It localises to the plastid. Its subcellular location is the chloroplast. In terms of biological role, protein S19 forms a complex with S13 that binds strongly to the 16S ribosomal RNA. The polypeptide is Small ribosomal subunit protein uS19c (Chloranthus spicatus (Chulantree)).